The primary structure comprises 256 residues: Thioredoxin-dependent peroxide reductase, mitochondrial (256 aa).

The N-terminal 61 residues, 1–61, are a transit peptide targeting the mitochondrion; it reads MAAAVGRLLR…KLFSTSSSYH (61 aa). Positions 63–221 constitute a Thioredoxin domain; that stretch reads PAVTQHAPYF…TLRLVKAFQY (159 aa). An N6-succinyllysine modification is found at K83. K91 carries the post-translational modification N6-acetyllysine; alternate. K91 is modified (N6-succinyllysine; alternate). The active-site Cysteine sulfenic acid (-SOH) intermediate is the C108. T146 carries the post-translational modification Phosphothreonine.

It belongs to the peroxiredoxin family. AhpC/Prx1 subfamily. As to quaternary structure, homodimer; disulfide-linked, upon oxidation. 6 homodimers assemble to form a ring-like dodecamer. Interacts with NEK6. Interacts with LRRK2. Interacts with MAP3K13. Interacts with RPS6KC1 (via PX domain). Phosphorylated by LRRK2; phosphorylation reduces perodixase activity. In terms of processing, the enzyme can be inactivated by further oxidation of the cysteine sulfenic acid (C(P)-SOH) to sulphinic acid (C(P)-SO2H) and sulphonic acid (C(P)-SO3H) instead of its condensation to a disulfide bond. Post-translationally, S-palmitoylated.

The protein localises to the mitochondrion. The protein resides in the cytoplasm. It is found in the early endosome. It carries out the reaction a hydroperoxide + [thioredoxin]-dithiol = an alcohol + [thioredoxin]-disulfide + H2O. Its function is as follows. Thiol-specific peroxidase that catalyzes the reduction of hydrogen peroxide and organic hydroperoxides to water and alcohols, respectively. Plays a role in cell protection against oxidative stress by detoxifying peroxides. Acts synergistically with MAP3K13 to regulate the activation of NF-kappa-B in the cytosol. Required for the maintenance of physical strength. This chain is Thioredoxin-dependent peroxide reductase, mitochondrial (PRDX3), found in Pongo abelii (Sumatran orangutan).